A 321-amino-acid chain; its full sequence is Probable 3-hydroxyisobutyrate dehydrogenase, mitochondrial (321 aa).

Residues 23 to 52 (KTVG…IVFD), 86 to 87 (LP), and T117 each bind NAD(+). Residue K192 is part of the active site. K267 serves as a coordination point for NAD(+).

The protein belongs to the HIBADH-related family. 3-hydroxyisobutyrate dehydrogenase subfamily.

The protein localises to the mitochondrion. The enzyme catalyses 3-hydroxy-2-methylpropanoate + NAD(+) = 2-methyl-3-oxopropanoate + NADH + H(+). The protein operates within amino-acid degradation; L-valine degradation. This Dictyostelium discoideum (Social amoeba) protein is Probable 3-hydroxyisobutyrate dehydrogenase, mitochondrial (hibA).